The chain runs to 101 residues: Phosphoribosyl-ATP pyrophosphatase (101 aa).

Belongs to the PRA-PH family.

It localises to the cytoplasm. The enzyme catalyses 1-(5-phospho-beta-D-ribosyl)-ATP + H2O = 1-(5-phospho-beta-D-ribosyl)-5'-AMP + diphosphate + H(+). Its pathway is amino-acid biosynthesis; L-histidine biosynthesis; L-histidine from 5-phospho-alpha-D-ribose 1-diphosphate: step 2/9. This chain is Phosphoribosyl-ATP pyrophosphatase, found in Natronomonas pharaonis (strain ATCC 35678 / DSM 2160 / CIP 103997 / JCM 8858 / NBRC 14720 / NCIMB 2260 / Gabara) (Halobacterium pharaonis).